The following is a 425-amino-acid chain: Type I restriction enzyme MjaVIII specificity subunit (425 aa).

Belongs to the type-I restriction system S methylase family. In terms of assembly, the type I restriction/modification system is composed of three polypeptides R, M and S.

Its function is as follows. The specificity (S) subunit of a type I restriction enzyme; this subunit dictates DNA sequence specificity. The M and S subunits together form a methyltransferase (MTase) that methylates A-2 on the top and A-3 on the bottom strand of the sequence 5'-GAYN(5)GTAA-3'. In the presence of the R subunit the complex can also act as an endonuclease, binding to the same target sequence but cutting the DNA some distance from this site. Whether the DNA is cut or modified depends on the methylation state of the target sequence. When the target site is unmodified, the DNA is cut. When the target site is hemimethylated, the complex acts as a maintenance MTase modifying the DNA so that both strands become methylated. After locating a non-methylated recognition site, the enzyme complex serves as a molecular motor that translocates DNA in an ATP-dependent manner until a collision occurs that triggers cleavage. This Methanocaldococcus jannaschii (strain ATCC 43067 / DSM 2661 / JAL-1 / JCM 10045 / NBRC 100440) (Methanococcus jannaschii) protein is Type I restriction enzyme MjaVIII specificity subunit.